The following is a 311-amino-acid chain: Cytosolic Fe-S cluster assembly factor Nubp1 homolog (311 aa).

[4Fe-4S] cluster-binding residues include C9, C23, C26, and C32. G63–S70 is an ATP binding site. The [4Fe-4S] cluster site is built by C241 and C244.

It belongs to the Mrp/NBP35 ATP-binding proteins family. NUBP1/NBP35 subfamily. As to quaternary structure, heterotetramer of 2 Nubp1 and 2 Nubp2 chains. [4Fe-4S] cluster serves as cofactor.

Its subcellular location is the cytoplasm. Its function is as follows. Component of the cytosolic iron-sulfur (Fe/S) protein assembly (CIA) machinery. Required for maturation of extramitochondrial Fe-S proteins. The Nubp1-Nubp2 heterotetramer forms a Fe-S scaffold complex, mediating the de novo assembly of an Fe-S cluster and its transfer to target apoproteins. The chain is Cytosolic Fe-S cluster assembly factor Nubp1 homolog from Drosophila grimshawi (Hawaiian fruit fly).